Here is a 360-residue protein sequence, read N- to C-terminus: Dihydroorotate dehydrogenase (quinone) (360 aa).

FMN is bound by residues 65 to 69 (AGLDK) and threonine 89. Residue lysine 69 coordinates substrate. Substrate is bound at residue 114–118 (NRLGF). The FMN site is built by asparagine 147 and asparagine 180. Residue asparagine 180 participates in substrate binding. Residue serine 183 is the Nucleophile of the active site. Asparagine 185 contributes to the substrate binding site. Residues lysine 225 and threonine 253 each contribute to the FMN site. Residue 254–255 (NT) participates in substrate binding. FMN-binding positions include glycine 276, glycine 305, and 326-327 (YT).

Belongs to the dihydroorotate dehydrogenase family. Type 2 subfamily. In terms of assembly, monomer. FMN serves as cofactor.

The protein resides in the cell membrane. The enzyme catalyses (S)-dihydroorotate + a quinone = orotate + a quinol. Its pathway is pyrimidine metabolism; UMP biosynthesis via de novo pathway; orotate from (S)-dihydroorotate (quinone route): step 1/1. Functionally, catalyzes the conversion of dihydroorotate to orotate with quinone as electron acceptor. This Verminephrobacter eiseniae (strain EF01-2) protein is Dihydroorotate dehydrogenase (quinone).